The sequence spans 662 residues: F-box/WD repeat-containing protein pof10 (662 aa).

The segment covering 1 to 16 (MKSEPTSLDFTSSNLR) has biased composition (polar residues). The interval 1-27 (MKSEPTSLDFTSSNLRRMNRDHSSNNT) is disordered. An F-box domain is found at 28-74 (NRTVLNLPKEILIIIFSFLDPRSLLSAQCTCKYWKKLLSDDLSWRTA). WD repeat units lie at residues 215 to 260 (SHAD…SLQS), 263 to 302 (FRSS…GYAR), and 429 to 468 (TAYS…FLKK). Residues 581-600 (SEEEIIAYVTMLSQEEEAKR) enclose the UIM 1 domain. The disordered stretch occupies residues 617 to 645 (ENDEQATSSLNALSSNHEPPQEQANVAEL). Over residues 621-640 (QATSSLNALSSNHEPPQEQA) the composition is skewed to polar residues. One can recognise a UIM 2 domain in the interval 646–662 (NEQEQIELAMRLSLMEM).

Part of a SCF (SKP1-cullin-F-box) protein ligase complex. Interacts with skp1.

The protein resides in the cytoplasm. Probably recognizes and binds to some phosphorylated proteins and promotes their ubiquitination and degradation. The sequence is that of F-box/WD repeat-containing protein pof10 (pof10) from Schizosaccharomyces pombe (strain 972 / ATCC 24843) (Fission yeast).